The sequence spans 246 residues: Proteasome subunit alpha (246 aa).

This sequence belongs to the peptidase T1A family. As to quaternary structure, the 20S proteasome core is composed of 14 alpha and 14 beta subunits that assemble into four stacked heptameric rings, resulting in a barrel-shaped structure. The two inner rings, each composed of seven catalytic beta subunits, are sandwiched by two outer rings, each composed of seven alpha subunits. The catalytic chamber with the active sites is on the inside of the barrel. Has probably a gated structure, the ends of the cylinder being occluded by the N-termini of the alpha-subunits. Is likely capped at one or both ends by the proteasome regulatory ATPase, PAN.

It localises to the cytoplasm. With respect to regulation, the formation of the proteasomal ATPase PAN-20S proteasome complex, via the docking of the C-termini of PAN into the intersubunit pockets in the alpha-rings, triggers opening of the gate for substrate entry. Interconversion between the open-gate and close-gate conformations leads to a dynamic regulation of the 20S proteasome proteolysis activity. In terms of biological role, component of the proteasome core, a large protease complex with broad specificity involved in protein degradation. The polypeptide is Proteasome subunit alpha (Archaeoglobus fulgidus (strain ATCC 49558 / DSM 4304 / JCM 9628 / NBRC 100126 / VC-16)).